A 260-amino-acid polypeptide reads, in one-letter code: Exosome complex component Rrp42 (260 aa).

It belongs to the RNase PH family. Rrp42 subfamily. Component of the archaeal exosome complex. Forms a hexameric ring-like arrangement composed of 3 Rrp41-Rrp42 heterodimers. The hexameric ring associates with a trimer of Rrp4 and/or Csl4 subunits.

The protein localises to the cytoplasm. Its function is as follows. Non-catalytic component of the exosome, which is a complex involved in RNA degradation. Contributes to the structuring of the Rrp41 active site. The protein is Exosome complex component Rrp42 of Thermoplasma acidophilum (strain ATCC 25905 / DSM 1728 / JCM 9062 / NBRC 15155 / AMRC-C165).